The sequence spans 288 residues: Elongation factor Ts (288 aa).

An involved in Mg(2+) ion dislocation from EF-Tu region spans residues 82–85 (TDFV).

This sequence belongs to the EF-Ts family.

It localises to the cytoplasm. In terms of biological role, associates with the EF-Tu.GDP complex and induces the exchange of GDP to GTP. It remains bound to the aminoacyl-tRNA.EF-Tu.GTP complex up to the GTP hydrolysis stage on the ribosome. The protein is Elongation factor Ts of Chlorobium limicola (strain DSM 245 / NBRC 103803 / 6330).